Consider the following 52-residue polypeptide: ATP synthase protein 8 (52 aa).

Residues 7–23 (MMWFSLFIMFSMTMMLF) traverse the membrane as a helical segment.

Belongs to the ATPase protein 8 family. As to quaternary structure, F-type ATPases have 2 components, CF(1) - the catalytic core - and CF(0) - the membrane proton channel.

The protein localises to the mitochondrion membrane. Functionally, mitochondrial membrane ATP synthase (F(1)F(0) ATP synthase or Complex V) produces ATP from ADP in the presence of a proton gradient across the membrane which is generated by electron transport complexes of the respiratory chain. F-type ATPases consist of two structural domains, F(1) - containing the extramembraneous catalytic core and F(0) - containing the membrane proton channel, linked together by a central stalk and a peripheral stalk. During catalysis, ATP synthesis in the catalytic domain of F(1) is coupled via a rotary mechanism of the central stalk subunits to proton translocation. Part of the complex F(0) domain. Minor subunit located with subunit a in the membrane. In Locusta migratoria (Migratory locust), this protein is ATP synthase protein 8 (MT-ATP8).